The following is a 71-amino-acid chain: Sec-independent protein translocase protein TatA (71 aa).

A helical transmembrane segment spans residues 1-21 (MGSFSLLHWLVVLVIVLLVFG). The disordered stretch occupies residues 43 to 71 (LHEDDKPTDQLGSTSQSTASGPQQDHGKH). A compositionally biased stretch (polar residues) spans 52-65 (QLGSTSQSTASGPQ).

The protein belongs to the TatA/E family. In terms of assembly, the Tat system comprises two distinct complexes: a TatABC complex, containing multiple copies of TatA, TatB and TatC subunits, and a separate TatA complex, containing only TatA subunits. Substrates initially bind to the TatABC complex, which probably triggers association of the separate TatA complex to form the active translocon.

The protein localises to the cell inner membrane. Part of the twin-arginine translocation (Tat) system that transports large folded proteins containing a characteristic twin-arginine motif in their signal peptide across membranes. TatA could form the protein-conducting channel of the Tat system. In Xylella fastidiosa (strain M12), this protein is Sec-independent protein translocase protein TatA.